Reading from the N-terminus, the 228-residue chain is Sugar fermentation stimulation protein homolog (228 aa).

The protein belongs to the SfsA family.

The sequence is that of Sugar fermentation stimulation protein homolog from Psychromonas ingrahamii (strain DSM 17664 / CCUG 51855 / 37).